We begin with the raw amino-acid sequence, 270 residues long: Myelin protein zero-like protein 1 (270 aa).

The first 35 residues, 1-35, serve as a signal peptide directing secretion; it reads MAEAVGAVALIAAPARRRWLWSVLAAMLGLLTARI. Residues 36–151 form the Ig-like V-type domain; that stretch reads SALEVHTPKE…DIVVRPGHIR (116 aa). Topologically, residues 36-162 are extracellular; the sequence is SALEVHTPKE…HVVEIDNLLV (127 aa). N-linked (GlcNAc...) asparagine glycans are attached at residues Asn-50 and Asn-130. A disulfide bridge connects residues Cys-58 and Cys-135. Residues 163 to 183 traverse the membrane as a helical segment; the sequence is FLVWVVVGTVTAVVLGLTLLI. Topologically, residues 184–270 are cytoplasmic; the sequence is SLVLVVLYRR…SVVYADIRKD (87 aa). The tract at residues 201 to 257 is disordered; that stretch reads TGCSTSERLSPVKQAPRKCPSDTEGLVKSPPSAGSHQGPVIYAQLDHSGGHHSGKIN. A phosphoserine mark is found at Ser-204, Ser-206, Ser-210, and Ser-221. An ITIM motif 1 motif is present at residues 240-245; it reads VIYAQL. Tyr-242 bears the Phosphotyrosine mark. Position 261 is a phosphoserine (Ser-261). Residues 262 to 267 carry the ITIM motif 2 motif; the sequence is VVYADI. Residue Tyr-264 is modified to Phosphotyrosine.

It belongs to the myelin P0 protein family. Interacts with phosphorylated PTPN11/SHP-2. In terms of processing, phosphorylated on tyrosine residues upon stimulation with pervanadate and concanavalin-A (ConA). Phosphorylation at Tyr-242 and Tyr-264 is required for interaction with PTPN11/SHP-2. Dephosphorylated by PTPN11/SHP-2 (in vitro).

It is found in the membrane. Its function is as follows. Cell surface receptor, which is involved in signal transduction processes. Recruits PTPN11/SHP-2 to the cell membrane and is a putative substrate of PTPN11/SHP-2. Is a major receptor for concanavalin-A (ConA) and is involved in cellular signaling induced by ConA, which probably includes Src family tyrosine-protein kinases. Isoform 2 seems to have a dominant negative role; it blocks tyrosine phosphorylation of MPZL1 induced by ConA. Isoform 1, but not isoform 2, may be involved in regulation of integrin-mediated cell motility. This is Myelin protein zero-like protein 1 (Mpzl1) from Mus musculus (Mouse).